Reading from the N-terminus, the 232-residue chain is Small ribosomal subunit protein uS2 (232 aa).

It belongs to the universal ribosomal protein uS2 family.

The protein is Small ribosomal subunit protein uS2 of Heliobacterium modesticaldum (strain ATCC 51547 / Ice1).